Here is a 144-residue protein sequence, read N- to C-terminus: Putative pre-16S rRNA nuclease (144 aa).

The protein belongs to the YqgF nuclease family.

It localises to the cytoplasm. Could be a nuclease involved in processing of the 5'-end of pre-16S rRNA. The polypeptide is Putative pre-16S rRNA nuclease (Blochmanniella pennsylvanica (strain BPEN)).